We begin with the raw amino-acid sequence, 274 residues long: MSQSTLVIIGAGGIGEAIARRVGPGKEVLLGDWSNALLQEATQRMKRDGFRVTSQHVNISSHDSVIQFAEKAQSLGQVMHVVISAGLSPVSSTRETILAVNLAGTGFCIAEFGKLIGHGGTCVVISSLAGYTLAQDVPHGVIQHLARTSPSDVLGLPLLRETVLDQWSAYGVSKRVNYVQVQDASLSWARRGARINSISPGAIQTPMLSLESQASKEEVVHDLAQNVPCKRVGDSGEVAHVAAFLLGSESSFVTGTDILVDGGALAYLSRDTSS.

Residues Ile14, Tyr170, Lys174, Ile203, and Thr205 each coordinate NADP(+). Residue Tyr170 is the Proton donor of the active site. The active-site Lowers pKa of active site Tyr is Lys174.

It belongs to the short-chain dehydrogenases/reductases (SDR) family.

The protein operates within mycotoxin biosynthesis. Its function is as follows. Short-chain dehydrogenase/reductase; part of the gene cluster that mediates the biosynthesis of the diterpene glucoside brassicicene C. In the first step of the brassicicene C biosynthesis, the bifunctional diterpene synthase bsc8 that possesses both prenyl transferase and terpene cyclase activity, converts isopentenyl diphosphate and dimethylallyl diphosphate into geranylgeranyl diphosphate (GGDP) that is further converted into fusicocca-2,10(14)-diene, the first precursor for brassicicene C. Fusicocca-2,10(14)-diene is then substrate of cytochrome P450 monooxygenase bsc1 for hydroxylation at the C-8 position. Oxidation at C-16 position to aldehyde is then catalyzed by the cytochrome P450 monooyxygenase bsc7, yielding fusicocca-2,10(14)-diene-8-beta,16-diol. Follows the isomerization of the double bond and reduction of aldehyde to alcohol catalyzed by the short-chain dehydrogenase/reductase bsc3 to yield the diol compound fusicocca-1,10(14)-diene-8 beta,16-diol. The next step is the oxidation at the C-3 position of fusicocca-2,10(14)-diene-8-beta,16-diol catalyzed by the alpha-ketoglutarate dependent dioxygenase bsc9, to produce a triol compound. Methylation of the hydroxy group at position 16 is performed by the methyltransferase bsc6. 16-O-methylation is followed by oxidation at the C-13 position to ketone and an alkyl shift of the methyl group leads to brassicicene C. Although the probable acetyltransferase bsc4 is included in the gene cluster, no acetylation reactions are necessary for brassicicene C biosynthesis. However, the fact that brassicicene E, which is a structurally related compound having an acetoxy group at position 12, was previously isolated from another strain of A.brassicicola suggests that the ATCC 96836 strain might also produce a small amount of brassicicene E. The protein is Short-chain dehydrogenase/reductase bsc3 of Alternaria brassicicola (Dark leaf spot agent).